The sequence spans 252 residues: tRNA (guanine-N(1)-)-methyltransferase (252 aa).

S-adenosyl-L-methionine-binding positions include Gly-116 and 135 to 140; that span reads LGDYVL.

The protein belongs to the RNA methyltransferase TrmD family. As to quaternary structure, homodimer.

The protein localises to the cytoplasm. The enzyme catalyses guanosine(37) in tRNA + S-adenosyl-L-methionine = N(1)-methylguanosine(37) in tRNA + S-adenosyl-L-homocysteine + H(+). Specifically methylates guanosine-37 in various tRNAs. The chain is tRNA (guanine-N(1)-)-methyltransferase from Limosilactobacillus fermentum (strain NBRC 3956 / LMG 18251) (Lactobacillus fermentum).